We begin with the raw amino-acid sequence, 240 residues long: Short palate, lung and nasal epithelium carcinoma-associated protein 2B (240 aa).

The signal sequence occupies residues 1-19; it reads MVQLWKLVLLCGLLAGTSA. Cysteine 163 and cysteine 206 are disulfide-bonded.

This sequence belongs to the BPI/LBP/Plunc superfamily. Plunc family. In terms of tissue distribution, parotid glands.

The protein resides in the secreted. This Bos taurus (Bovine) protein is Short palate, lung and nasal epithelium carcinoma-associated protein 2B (SPLUNC2B).